Reading from the N-terminus, the 127-residue chain is Small ribosomal subunit protein uS11 (127 aa).

The protein belongs to the universal ribosomal protein uS11 family. Part of the 30S ribosomal subunit. Interacts with proteins S7 and S18. Binds to IF-3.

Functionally, located on the platform of the 30S subunit, it bridges several disparate RNA helices of the 16S rRNA. Forms part of the Shine-Dalgarno cleft in the 70S ribosome. The protein is Small ribosomal subunit protein uS11 of Chlorobium phaeobacteroides (strain BS1).